Reading from the N-terminus, the 190-residue chain is Elongation factor P 2 (190 aa).

It belongs to the elongation factor P family.

The protein resides in the cytoplasm. Its pathway is protein biosynthesis; polypeptide chain elongation. Its function is as follows. Involved in peptide bond synthesis. Stimulates efficient translation and peptide-bond synthesis on native or reconstituted 70S ribosomes in vitro. Probably functions indirectly by altering the affinity of the ribosome for aminoacyl-tRNA, thus increasing their reactivity as acceptors for peptidyl transferase. This Chlamydia pneumoniae (Chlamydophila pneumoniae) protein is Elongation factor P 2 (efp2).